The chain runs to 397 residues: Putative odorant receptor 83c (397 aa).

Topologically, residues 1 to 39 (MSTSESPSSRFRELSKYINSLTNLLGVDFLSPKLKFNYR) are cytoplasmic. A helical transmembrane segment spans residues 40-60 (TWTTIFAIANYTGFTVFTILN). Over 61-70 (NGGDWRVGLK) the chain is Extracellular. Residues 71-90 (ASLMTGGLFHGLGKFLTCLL) form a helical membrane-spanning segment. The Cytoplasmic segment spans residues 91 to 136 (KHQDMRRLVLYSQSIYDEYETRGDSYHRTLNSNIDRLLGIMKIIRN). The helical transmembrane segment at 137–157 (GYVFAFCLMELLPLAMLMYDG) threads the bilayer. Topologically, residues 158-186 (TRVTAMQYLIPGLPLENNYCYVVTYMIQT) are extracellular. Residues 187-207 (VTMLVQGVGFYSGDLFVFLGL) traverse the membrane as a helical segment. The Cytoplasmic segment spans residues 208 to 282 (TQILTFADML…ALYYELIATQ (75 aa)). Residues 283–299 (VLSMALAMMLSFCINLS) form a helical membrane-spanning segment. The Extracellular segment spans residues 300-305 (SFHMPS). The helical transmembrane segment at 306–326 (AIFFVVSAYSMSIYCILGTIL) threads the bilayer. The Cytoplasmic segment spans residues 327-365 (EFAYDQVYESICNVTWYELSGEQRKLFGFLLRESQYPHN). Residues 366–386 (IQILGVMSLSVRTALQIVKLI) form a helical membrane-spanning segment. Topologically, residues 387–397 (YSVSMMMMNRA) are extracellular.

The protein belongs to the insect chemoreceptor superfamily. Heteromeric odorant receptor channel (TC 1.A.69) family. Or67d subfamily. As to quaternary structure, interacts with Orco. Complexes exist early in the endomembrane system in olfactory sensory neurons (OSNs), coupling these complexes to the conserved ciliary trafficking pathway. Expressed in olfactory sensory neurons in the antenna.

The protein localises to the cell membrane. Odorant receptor which mediates acceptance or avoidance behavior, depending on its substrates. The odorant receptor repertoire encodes a large collection of odor stimuli that vary widely in identity, intensity, and duration. May form a complex with Orco to form odorant-sensing units, providing sensitive and prolonged odorant signaling and calcium permeability. In Drosophila melanogaster (Fruit fly), this protein is Putative odorant receptor 83c (Or83c).